The primary structure comprises 544 residues: Potential vesicular glutamate transporter vglu-3 (544 aa).

Topologically, residues 1–49 (MPNGSIRNCANAVADTVRQTFSRKTWEHKEQLQTITEQKKFFLRKVRWQ) are cytoplasmic. A helical transmembrane segment spans residues 50–70 (IAILAHFGFAISFGIRSNFGV). At 71 to 104 (AKNRMVNNFTDAYGEVHEREFLWTGAEVGMMESS) the chain is on the extracellular side. N-linked (GlcNAc...) asparagine glycosylation occurs at Asn-78. A helical transmembrane segment spans residues 105 to 125 (FFYGYAASQIPAGVLAAKFAP). Residues 126-127 (NK) are Cytoplasmic-facing. Residues 128–148 (IFMLGILVASFMNILSAISFN) traverse the membrane as a helical segment. The Extracellular portion of the chain corresponds to 149–154 (FHPYTD). A helical transmembrane segment spans residues 155-175 (IFVMVVQAVQGLALGVLYPAM). Residues 176 to 193 (HGVWKFWAPPLERSKLAT) are Cytoplasmic-facing. The chain crosses the membrane as a helical span at residues 194–214 (TAFTGSSVGVMTGLPASAYLV). Residues 215–219 (SHFSW) lie on the Extracellular side of the membrane. The helical transmembrane segment at 220-240 (STPFYVFGVVGIIWSLIWMYV) threads the bilayer. At 241-285 (SSHSPETHGYISDDEKKQVTEKIGDVAVKNMSLTTLPWRDMMTSS) the chain is on the cytoplasmic side. Residues 286–306 (AVWAIIICTFCRSWGFFLLLG) traverse the membrane as a helical segment. Topologically, residues 307–323 (NQLTYMKDVLHIDIKNS) are extracellular. The chain crosses the membrane as a helical span at residues 324–344 (GFISIFPQFGMCIVTLATGQL). The Cytoplasmic segment spans residues 345 to 360 (CDYLRSSGKMSTEAVR). A helical transmembrane segment spans residues 361–381 (KSVNTFGFTVEAMMLGCLAFV). Residues 382–384 (RDP) are Extracellular-facing. The helical transmembrane segment at 385–405 (VIAVTCLVIACTGSGSVLSGF) threads the bilayer. At 406 to 416 (NVNHFDIAPRY) the chain is on the cytoplasmic side. Residues 417–437 (APILMGIANGLGAVAGVGGMV) form a helical membrane-spanning segment. The Extracellular portion of the chain corresponds to 438 to 450 (TNTVTYQNPDGWK). A helical membrane pass occupies residues 451–471 (WVFLLAMAIDIFGVIFFLIFA). Over 472–544 (KGDVLPWARE…APAEKSESSS (73 aa)) the chain is Cytoplasmic. Residues 501 to 544 (SLSRKTRNREGDTSYEKMEEDSEMKPCSKKVEARAPAEKSESSS) are disordered. Over residues 508–544 (NREGDTSYEKMEEDSEMKPCSKKVEARAPAEKSESSS) the composition is skewed to basic and acidic residues.

Belongs to the major facilitator superfamily. Sodium/anion cotransporter family. VGLUT subfamily.

It localises to the membrane. This is Potential vesicular glutamate transporter vglu-3 (vglu-3) from Caenorhabditis elegans.